Reading from the N-terminus, the 354-residue chain is Serine/threonine-protein kinase ppk34 (354 aa).

Residues 40 to 331 form the Protein kinase domain; sequence YRLKNMLGYG…IEELLRDPFL (292 aa). ATP-binding positions include 46-54 and lysine 69; that span reads LGYGACSTV. Residue aspartate 200 is the Proton acceptor of the active site.

This sequence belongs to the protein kinase superfamily. Ser/Thr protein kinase family.

It localises to the cytoplasm. It is found in the nucleus. The enzyme catalyses L-seryl-[protein] + ATP = O-phospho-L-seryl-[protein] + ADP + H(+). It catalyses the reaction L-threonyl-[protein] + ATP = O-phospho-L-threonyl-[protein] + ADP + H(+). The polypeptide is Serine/threonine-protein kinase ppk34 (ppk34) (Schizosaccharomyces pombe (strain 972 / ATCC 24843) (Fission yeast)).